The following is a 168-amino-acid chain: MADLFALTEEALAGMDIELVDVERAAMGLLRVTIDRVDGVRIEDCEQVSRQLSHVYEVENIDYKRLEVGSPGVDRPLRNEAEFRRFAGERIEIKLREALDGRKVFSGTLRAPEADGASGQDDTAGAGKAVFGLEFEAKKNDIQVLSFTLDDIERAKLDPVLDFKGKKR.

This sequence belongs to the RimP family.

It localises to the cytoplasm. Required for maturation of 30S ribosomal subunits. This Bordetella parapertussis (strain 12822 / ATCC BAA-587 / NCTC 13253) protein is Ribosome maturation factor RimP.